The primary structure comprises 295 residues: MMRILLFVATNLAVVLVASITLSLFGFNGFMAANGVDLNLSSLLVFCAVFGFAGSLVSLFISKWMAKMTTGTQIISQPRTRHEQWLLQTVEELSREAGIKMPEVGIFPAYEANAFATGWNRNDALVAVSQGLLERFSPDEVRAVLAHEIGHVANGDMVTLALVQGVVNTFVMFFARIIGNFVDKVIFKNEEGQGIAYYVATIVAELILGILASMIVMWFSRRREFRADEAGAQLAGTAAMIGALQRLRVEQGLPVHMPDTMKAFGINGGLKHGLAGLLMSHPPLEERIEALRRRG.

2 helical membrane passes run 4–24 (ILLF…TLSL) and 41–61 (SSLL…SLFI). Position 147 (His147) interacts with Zn(2+). Glu148 is an active-site residue. His151 is a Zn(2+) binding site. 2 consecutive transmembrane segments (helical) span residues 158-178 (VTLA…ARII) and 199-219 (VATI…VMWF). Glu224 provides a ligand contact to Zn(2+).

It belongs to the peptidase M48B family. Zn(2+) is required as a cofactor.

It is found in the cell inner membrane. The chain is Protease HtpX from Pseudomonas putida (strain ATCC 700007 / DSM 6899 / JCM 31910 / BCRC 17059 / LMG 24140 / F1).